A 165-amino-acid polypeptide reads, in one-letter code: uncharacterized protein (165 aa).

This is an uncharacterized protein from Invertebrate iridescent virus 6 (IIV-6).